A 120-amino-acid chain; its full sequence is Small ribosomal subunit protein bS16 (120 aa).

A disordered region spans residues 81 to 120 (GLAKRPTRNNPQKAEPGEKAKERAAKRAEKAAAPAEDAAA). The span at 95–110 (EPGEKAKERAAKRAEK) shows a compositional bias: basic and acidic residues. Residues 111–120 (AAAPAEDAAA) are compositionally biased toward low complexity.

This sequence belongs to the bacterial ribosomal protein bS16 family.

This Methylorubrum extorquens (strain CM4 / NCIMB 13688) (Methylobacterium extorquens) protein is Small ribosomal subunit protein bS16.